The sequence spans 366 residues: Phospho-2-dehydro-3-deoxyheptonate aldolase (366 aa).

Belongs to the class-I DAHP synthase family.

The catalysed reaction is D-erythrose 4-phosphate + phosphoenolpyruvate + H2O = 7-phospho-2-dehydro-3-deoxy-D-arabino-heptonate + phosphate. Its pathway is metabolic intermediate biosynthesis; chorismate biosynthesis; chorismate from D-erythrose 4-phosphate and phosphoenolpyruvate: step 1/7. In terms of biological role, stereospecific condensation of phosphoenolpyruvate (PEP) and D-erythrose-4-phosphate (E4P) giving rise to 3-deoxy-D-arabino-heptulosonate-7-phosphate (DAHP). This Corynebacterium glutamicum (strain ATCC 13032 / DSM 20300 / JCM 1318 / BCRC 11384 / CCUG 27702 / LMG 3730 / NBRC 12168 / NCIMB 10025 / NRRL B-2784 / 534) protein is Phospho-2-dehydro-3-deoxyheptonate aldolase (aroG).